A 212-amino-acid polypeptide reads, in one-letter code: 3-isopropylmalate dehydratase small subunit (212 aa).

It belongs to the LeuD family. LeuD type 1 subfamily. As to quaternary structure, heterodimer of LeuC and LeuD.

The enzyme catalyses (2R,3S)-3-isopropylmalate = (2S)-2-isopropylmalate. It participates in amino-acid biosynthesis; L-leucine biosynthesis; L-leucine from 3-methyl-2-oxobutanoate: step 2/4. In terms of biological role, catalyzes the isomerization between 2-isopropylmalate and 3-isopropylmalate, via the formation of 2-isopropylmaleate. This Beutenbergia cavernae (strain ATCC BAA-8 / DSM 12333 / CCUG 43141 / JCM 11478 / NBRC 16432 / NCIMB 13614 / HKI 0122) protein is 3-isopropylmalate dehydratase small subunit.